We begin with the raw amino-acid sequence, 148 residues long: SsrA-binding protein (148 aa).

Residues 128-148 (ESIAKKDQERNLKREFKNNNR) are disordered.

Belongs to the SmpB family.

The protein localises to the cytoplasm. Its function is as follows. Required for rescue of stalled ribosomes mediated by trans-translation. Binds to transfer-messenger RNA (tmRNA), required for stable association of tmRNA with ribosomes. tmRNA and SmpB together mimic tRNA shape, replacing the anticodon stem-loop with SmpB. tmRNA is encoded by the ssrA gene; the 2 termini fold to resemble tRNA(Ala) and it encodes a 'tag peptide', a short internal open reading frame. During trans-translation Ala-aminoacylated tmRNA acts like a tRNA, entering the A-site of stalled ribosomes, displacing the stalled mRNA. The ribosome then switches to translate the ORF on the tmRNA; the nascent peptide is terminated with the 'tag peptide' encoded by the tmRNA and targeted for degradation. The ribosome is freed to recommence translation, which seems to be the essential function of trans-translation. The chain is SsrA-binding protein from Fusobacterium nucleatum subsp. nucleatum (strain ATCC 25586 / DSM 15643 / BCRC 10681 / CIP 101130 / JCM 8532 / KCTC 2640 / LMG 13131 / VPI 4355).